The chain runs to 124 residues: Holo-[acyl-carrier-protein] synthase (124 aa).

The Mg(2+) site is built by Asp8 and Glu57.

This sequence belongs to the P-Pant transferase superfamily. AcpS family. The cofactor is Mg(2+).

The protein resides in the cytoplasm. It catalyses the reaction apo-[ACP] + CoA = holo-[ACP] + adenosine 3',5'-bisphosphate + H(+). Its function is as follows. Transfers the 4'-phosphopantetheine moiety from coenzyme A to a Ser of acyl-carrier-protein. This Leptospira borgpetersenii serovar Hardjo-bovis (strain JB197) protein is Holo-[acyl-carrier-protein] synthase.